The primary structure comprises 72 residues: Translation initiation factor IF-1 (72 aa).

The S1-like domain maps to 1–72 (MAKEGNIEME…SKGRIVYRAR (72 aa)).

It belongs to the IF-1 family. Component of the 30S ribosomal translation pre-initiation complex which assembles on the 30S ribosome in the order IF-2 and IF-3, IF-1 and N-formylmethionyl-tRNA(fMet); mRNA recruitment can occur at any time during PIC assembly.

The protein localises to the cytoplasm. Functionally, one of the essential components for the initiation of protein synthesis. Stabilizes the binding of IF-2 and IF-3 on the 30S subunit to which N-formylmethionyl-tRNA(fMet) subsequently binds. Helps modulate mRNA selection, yielding the 30S pre-initiation complex (PIC). Upon addition of the 50S ribosomal subunit IF-1, IF-2 and IF-3 are released leaving the mature 70S translation initiation complex. This is Translation initiation factor IF-1 from Hahella chejuensis (strain KCTC 2396).